A 363-amino-acid chain; its full sequence is MTPVTPVPPQSPQQVKGLLSRFLTAPDRHPKLRYVYDIALIAISILCIVSIILWTQGSGLALFAIAPALAIGALGVTLLVSDLAESQKSKEIADTVAAVSLPFILTGTAAGLMFSAIAVGGGAVILANPLFLMGSMTLGFALMSLHRVTYQYLSNREQWKQQKKLEQVELAAWESHLPKESKSSALEEVRYSPRLMKRGKTWRKRAIRRKNYTPIPLVDKTLQTMQPDALFSSTTTHSTDSEQILTSVSPQSSDTESSSSSSFHTPPNSDKELSDSNSSDSSSSSEYMDALETVAAGDVSGITPPSKPSSSPKTTRRVVKLSRSERNAQHHRNKDQEQRQDSSESSEEDSSSDSSQKKKPSRK.

The next 4 membrane-spanning stretches (helical) occupy residues 34–54, 60–80, 91–111, and 112–132; these read YVYD…IILW, LALF…TLLV, EIAD…TAAG, and LMFS…PLFL. Polar residues predominate over residues 232 to 245; the sequence is SSTTTHSTDSEQIL. The disordered stretch occupies residues 232–363; sequence SSTTTHSTDS…SSQKKKPSRK (132 aa). 2 stretches are compositionally biased toward low complexity: residues 246 to 268 and 275 to 285; these read TSVS…TPPN and DSNSSDSSSSS. Positions 322-342 are enriched in basic and acidic residues; it reads SRSERNAQHHRNKDQEQRQDS.

This sequence belongs to the chlamydial CPn_0443/CT_005/TC_0273 family.

The protein localises to the cell membrane. This is an uncharacterized protein from Chlamydia trachomatis serovar D (strain ATCC VR-885 / DSM 19411 / UW-3/Cx).